The chain runs to 88 residues: MASKEFHIVVETGIHARPATLLVHTASKFTSEITLEYKGKSVNLKSIMGVMSLGVGQGADVTISAEGADADDAISTIAETMTKEGLAE.

Positions 1 to 88 constitute an HPr domain; sequence MASKEFHIVV…ETMTKEGLAE (88 aa). His15 acts as the Pros-phosphohistidine intermediate in catalysis. Ser46 is subject to Phosphoserine; by HPrK/P.

This sequence belongs to the HPr family.

The protein resides in the cytoplasm. Its activity is regulated as follows. Phosphorylation on Ser-46 inhibits the phosphoryl transfer from enzyme I to HPr. In terms of biological role, general (non sugar-specific) component of the phosphoenolpyruvate-dependent sugar phosphotransferase system (sugar PTS). This major carbohydrate active-transport system catalyzes the phosphorylation of incoming sugar substrates concomitantly with their translocation across the cell membrane. The phosphoryl group from phosphoenolpyruvate (PEP) is transferred to the phosphoryl carrier protein HPr by enzyme I. Phospho-HPr then transfers it to the PTS EIIA domain. P-Ser-HPr interacts with the catabolite control protein A (CcpA), forming a complex that binds to DNA at the catabolite response elements cre, operator sites preceding a large number of catabolite-regulated genes. Thus, P-Ser-HPr is a corepressor in carbon catabolite repression (CCR), a mechanism that allows bacteria to coordinate and optimize the utilization of available carbon sources. P-Ser-HPr also plays a role in inducer exclusion, in which it probably interacts with several non-PTS permeases and inhibits their transport activity. In Lactococcus lactis subsp. lactis (strain IL1403) (Streptococcus lactis), this protein is Phosphocarrier protein HPr (ptsH).